Reading from the N-terminus, the 29-residue chain is Brevinin-2Ra (29 aa).

Cysteines 23 and 29 form a disulfide.

In terms of tissue distribution, expressed by the skin glands.

It localises to the secreted. Functionally, antimicrobial peptide. This chain is Brevinin-2Ra, found in Pelophylax ridibundus (Marsh frog).